A 394-amino-acid polypeptide reads, in one-letter code: Elongation factor Tu (394 aa).

One can recognise a tr-type G domain in the interval lysine 10–glutamate 204. The segment at glycine 19–threonine 26 is G1. A GTP-binding site is contributed by glycine 19–threonine 26. Residue threonine 26 coordinates Mg(2+). The segment at glycine 60–asparagine 64 is G2. Residues aspartate 81–glycine 84 form a G3 region. Residues aspartate 81–histidine 85 and asparagine 136–aspartate 139 contribute to the GTP site. A G4 region spans residues asparagine 136–aspartate 139. Positions serine 174 to leucine 176 are G5.

The protein belongs to the TRAFAC class translation factor GTPase superfamily. Classic translation factor GTPase family. EF-Tu/EF-1A subfamily. In terms of assembly, monomer.

It is found in the cytoplasm. It carries out the reaction GTP + H2O = GDP + phosphate + H(+). GTP hydrolase that promotes the GTP-dependent binding of aminoacyl-tRNA to the A-site of ribosomes during protein biosynthesis. The protein is Elongation factor Tu of Colwellia psychrerythraea (strain 34H / ATCC BAA-681) (Vibrio psychroerythus).